The following is a 166-amino-acid chain: Endoribonuclease YbeY (166 aa).

Zn(2+) contacts are provided by histidine 132, histidine 136, and histidine 142.

The protein belongs to the endoribonuclease YbeY family. Zn(2+) serves as cofactor.

The protein localises to the cytoplasm. In terms of biological role, single strand-specific metallo-endoribonuclease involved in late-stage 70S ribosome quality control and in maturation of the 3' terminus of the 16S rRNA. The polypeptide is Endoribonuclease YbeY (Clostridium botulinum (strain Langeland / NCTC 10281 / Type F)).